We begin with the raw amino-acid sequence, 504 residues long: Maturase K (504 aa).

It belongs to the intron maturase 2 family. MatK subfamily.

It is found in the plastid. It localises to the chloroplast. Functionally, usually encoded in the trnK tRNA gene intron. Probably assists in splicing its own and other chloroplast group II introns. The sequence is that of Maturase K from Fagus hayatae (Formosan elm).